A 271-amino-acid chain; its full sequence is MLSIQQPLLVFSDLDGTLLDSHSYDWQPAAPWLSRLREANVPVILCSSKTSAEMLYLQKMLGLQGLPLIAENGAVIQLAEQWQDIDGFPRIISGISHGEISQVLNTLREKEHFKFTTFDDVDDATIAEWTGLSRSQAALTQLHEASVTLIWRDSDERMAQFTTRLHELGLQFMQGARFWHVLDASAGKDQAANWIIATYQQLSGKRPTTLGLGDGPNDAPLLEVMDYAVIVKGLNREGVHLHDEDPARVWRTQREGPEGWREGLDHFFSAH.

The active-site Nucleophile is the D13. The Mg(2+) site is built by D13, D15, and D214.

Belongs to the HAD-like hydrolase superfamily. MPGP family. Mg(2+) serves as cofactor.

It is found in the cytoplasm. It carries out the reaction 2-O-(alpha-D-mannosyl)-3-phosphoglycerate + H2O = (2R)-2-O-(alpha-D-mannosyl)-glycerate + phosphate. This Escherichia coli O17:K52:H18 (strain UMN026 / ExPEC) protein is Mannosyl-3-phosphoglycerate phosphatase.